Reading from the N-terminus, the 113-residue chain is Cytochrome c (113 aa).

Heme c-binding residues include Cys-21, Cys-24, His-25, and Met-90.

The protein belongs to the cytochrome c family. Binds 1 heme c group covalently per subunit.

The protein localises to the mitochondrion intermembrane space. Functionally, electron carrier protein. The oxidized form of the cytochrome c heme group can accept an electron from the heme group of the cytochrome c1 subunit of cytochrome reductase. Cytochrome c then transfers this electron to the cytochrome oxidase complex, the final protein carrier in the mitochondrial electron-transport chain. This chain is Cytochrome c (cytC), found in Dictyostelium discoideum (Social amoeba).